Consider the following 156-residue polypeptide: SsrA-binding protein (156 aa).

The protein belongs to the SmpB family.

The protein resides in the cytoplasm. Functionally, required for rescue of stalled ribosomes mediated by trans-translation. Binds to transfer-messenger RNA (tmRNA), required for stable association of tmRNA with ribosomes. tmRNA and SmpB together mimic tRNA shape, replacing the anticodon stem-loop with SmpB. tmRNA is encoded by the ssrA gene; the 2 termini fold to resemble tRNA(Ala) and it encodes a 'tag peptide', a short internal open reading frame. During trans-translation Ala-aminoacylated tmRNA acts like a tRNA, entering the A-site of stalled ribosomes, displacing the stalled mRNA. The ribosome then switches to translate the ORF on the tmRNA; the nascent peptide is terminated with the 'tag peptide' encoded by the tmRNA and targeted for degradation. The ribosome is freed to recommence translation, which seems to be the essential function of trans-translation. The protein is SsrA-binding protein of Clostridium beijerinckii (strain ATCC 51743 / NCIMB 8052) (Clostridium acetobutylicum).